A 395-amino-acid polypeptide reads, in one-letter code: HORMA domain-containing protein 1 (395 aa).

Residues Gln24 to Val226 form the HORMA domain. Residues Asp329 to Val395 form a disordered region. A compositionally biased stretch (polar residues) spans Lys344–Lys353. The segment covering Ser354–Gln363 has biased composition (basic and acidic residues). Phosphoserine is present on Ser377. Positions Lys384–Lys387 match the Nuclear localization signal motif.

In terms of assembly, interacts with HORMAD2. Interacts with IHO1. Post-translationally, phosphorylated at Ser-378 in a SPO11-dependent manner.

It is found in the nucleus. Its subcellular location is the chromosome. Functionally, plays a key role in meiotic progression. Regulates 3 different functions during meiosis: ensures that sufficient numbers of processed DNA double-strand breaks (DSBs) are available for successful homology search by increasing the steady-state numbers of single-stranded DSB ends. Promotes synaptonemal-complex formation independently of its role in homology search. Plays a key role in the male mid-pachytene checkpoint and the female meiotic prophase checkpoint: required for efficient build-up of ATR activity on unsynapsed chromosome regions, a process believed to form the basis of meiotic silencing of unsynapsed chromatin (MSUC) and meiotic prophase quality control in both sexes. The protein is HORMA domain-containing protein 1 (HORMAD1) of Canis lupus familiaris (Dog).